The sequence spans 793 residues: Cation channel sperm-associated auxiliary subunit delta (793 aa).

Residues 1–20 form the signal peptide; that stretch reads MLMLMLVAAVTMWLRPLVTA. The Extracellular segment spans residues 21 to 725; it reads QPLCRARTVR…AFPVQLVSAG (705 aa). Disulfide bonds link C24–C370, C60–C146, C145–C153, C388–C497, C511–C703, C526–C573, and C625–C653. N128 carries N-linked (GlcNAc...) asparagine glycosylation. Residues N231, N241, N473, N539, and N631 are each glycosylated (N-linked (GlcNAc...) asparagine). Residues 726–747 form a helical membrane-spanning segment; the sequence is VVMVLLISSILGSVWLAYMIPR. Topologically, residues 748-793 are cytoplasmic; it reads LLRTARGRRMTSFVAQLYGRCKTVCQFRASATARTGSKPMGRHRSS.

Belongs to the CATSPERD family. Component of the CatSper complex or CatSpermasome composed of the core pore-forming members CATSPER1, CATSPER2, CATSPER3 and CATSPER4 as well as auxiliary members CATSPERB, CATSPERG, CATSPERD, CATSPERE, CATSPERZ, C2CD6/CATSPERT, TMEM249, TMEM262 and EFCAB9. HSPA1 may be an additional auxiliary complex member. The core complex members CATSPER1, CATSPER2, CATSPER3 and CATSPER4 form a heterotetrameric channel. The auxiliary CATSPERB, CATSPERG, CATSPERD and CATSPERE subunits form a pavilion-like structure over the pore which stabilizes the complex through interactions with CATSPER4, CATSPER3, CATSPER1 and CATSPER2 respectively. TMEM262/CATSPERH interacts with CATSPERB, further stabilizing the complex. C2CD6/CATSPERT interacts at least with CATSPERD and is required for targeting the CatSper complex in the flagellar membrane.

The protein resides in the cell projection. It is found in the cilium. Its subcellular location is the flagellum membrane. In terms of biological role, auxiliary component of the CatSper complex, a complex involved in sperm cell hyperactivation. Sperm cell hyperactivation is needed for sperm motility which is essential late in the preparation of sperm for fertilization. Required for CATSPER1 stability before intraflagellar transport and/or incorporation of the CatSper complex channel into the flagellar membrane. The sequence is that of Cation channel sperm-associated auxiliary subunit delta from Macaca fascicularis (Crab-eating macaque).